Reading from the N-terminus, the 286-residue chain is ATP synthase gamma chain (286 aa).

This sequence belongs to the ATPase gamma chain family. In terms of assembly, F-type ATPases have 2 components, CF(1) - the catalytic core - and CF(0) - the membrane proton channel. CF(1) has five subunits: alpha(3), beta(3), gamma(1), delta(1), epsilon(1). CF(0) has three main subunits: a, b and c.

It is found in the cell inner membrane. Functionally, produces ATP from ADP in the presence of a proton gradient across the membrane. The gamma chain is believed to be important in regulating ATPase activity and the flow of protons through the CF(0) complex. In Shewanella amazonensis (strain ATCC BAA-1098 / SB2B), this protein is ATP synthase gamma chain.